The sequence spans 307 residues: MPINVPDGLPAAEILTKEDVFIMEEKRAEHQDIRPLSIVILNLMPNKIITETQILRLLGNSPLQVDITLLYPETHRSKNTPEEYLIKYYQTFDSIKDQKFDGMIITGAPIEQMPFEEVDFWPELQKIMDWSKANVFSTLFICWGAQAGLYHFFGVPKYPLPAKMFGVFPHTLNRRDIRLLRGFDDIFYVPHSRHTEVRKEDIVKVPELEILSESEESGVYLVGTKGGRQIFVTGHSEYDPYTLKAEYDRDISYELPINIPQNYYPGDDPRQTPVVRWRGHSNLLFANWLNYYVYQETPYNLEELGNR.

The active-site Acyl-thioester intermediate is C142. Positions 163 and 192 each coordinate substrate. H235 acts as the Proton acceptor in catalysis. E237 is a catalytic residue. R249 is a substrate binding site.

This sequence belongs to the MetA family.

The protein resides in the cytoplasm. It catalyses the reaction L-homoserine + acetyl-CoA = O-acetyl-L-homoserine + CoA. Its pathway is amino-acid biosynthesis; L-methionine biosynthesis via de novo pathway; O-acetyl-L-homoserine from L-homoserine: step 1/1. Its function is as follows. Transfers an acetyl group from acetyl-CoA to L-homoserine, forming acetyl-L-homoserine. The sequence is that of Homoserine O-acetyltransferase from Desulfitobacterium hafniense (strain Y51).